The following is a 339-amino-acid chain: Fructose-1,6-bisphosphatase class 1 (339 aa).

Positions 91, 113, 115, and 116 each coordinate Mg(2+). Residues 116–119 (DGSS), Asn210, and Lys276 contribute to the substrate site. A Mg(2+)-binding site is contributed by Glu282.

It belongs to the FBPase class 1 family. As to quaternary structure, homotetramer. Requires Mg(2+) as cofactor.

The protein localises to the cytoplasm. The enzyme catalyses beta-D-fructose 1,6-bisphosphate + H2O = beta-D-fructose 6-phosphate + phosphate. It functions in the pathway carbohydrate biosynthesis; gluconeogenesis. The polypeptide is Fructose-1,6-bisphosphatase class 1 (Bordetella bronchiseptica (strain ATCC BAA-588 / NCTC 13252 / RB50) (Alcaligenes bronchisepticus)).